A 240-amino-acid chain; its full sequence is Proline-rich antigen homolog (240 aa).

2 stretches are compositionally biased toward pro residues: residues 1–31 (MTEQPPPGGSYPPPPPPPGPSGGHEPPPAAP) and 38–78 (APPP…PPGP). The segment at 1–78 (MTEQPPPGGS…GGYAPPPPGP (78 aa)) is disordered. Positions 89–233 (TPWITRVLAA…KRQTLADKIM (145 aa)) constitute an RDD domain. Transmembrane regions (helical) follow at residues 98 to 118 (AFIDWAPYVVLVGIGWVIMLV), 142 to 162 (SMIGQLVQWLLSVGGLAYLVW), and 203 to 223 (LAHFIDAIICFVGFLFPLWDA).

This sequence belongs to the mycobacterial Pra family.

The protein resides in the cell membrane. The polypeptide is Proline-rich antigen homolog (Mycobacterium tuberculosis (strain CDC 1551 / Oshkosh)).